The chain runs to 334 residues: PDZ domain-containing protein MAGIX (334 aa).

Basic and acidic residues-rich tracts occupy residues 1-13 (MEPR…DPRG) and 209-224 (LETH…EPRK). 2 disordered regions span residues 1–26 (MEPR…LAGP) and 209–306 (LETH…WLVP). A PDZ domain is found at 125–209 (SVELVRGYAG…QLHLVIRRPL (85 aa)). Residues 244-260 (GSRSSSTSLVQHPPSRT) are compositionally biased toward polar residues. Ser272 is modified (phosphoserine).

This Homo sapiens (Human) protein is PDZ domain-containing protein MAGIX (MAGIX).